Here is a 275-residue protein sequence, read N- to C-terminus: Bis(5'-nucleosyl)-tetraphosphatase, symmetrical (275 aa).

Belongs to the Ap4A hydrolase family.

The catalysed reaction is P(1),P(4)-bis(5'-adenosyl) tetraphosphate + H2O = 2 ADP + 2 H(+). Functionally, hydrolyzes diadenosine 5',5'''-P1,P4-tetraphosphate to yield ADP. This Haemophilus influenzae (strain PittEE) protein is Bis(5'-nucleosyl)-tetraphosphatase, symmetrical.